Here is a 374-residue protein sequence, read N- to C-terminus: N5-carboxyaminoimidazole ribonucleotide synthase (374 aa).

Residues arginine 108, lysine 148, 153–159 (GYDGKGQ), 183–186 (EKYL), glutamate 191, histidine 214, and 266–267 (NE) each bind ATP. Positions 112 to 296 (KETLKSAGTK…QFDTHILAVT (185 aa)) constitute an ATP-grasp domain.

The protein belongs to the PurK/PurT family. In terms of assembly, homodimer.

It carries out the reaction 5-amino-1-(5-phospho-beta-D-ribosyl)imidazole + hydrogencarbonate + ATP = 5-carboxyamino-1-(5-phospho-D-ribosyl)imidazole + ADP + phosphate + 2 H(+). Its pathway is purine metabolism; IMP biosynthesis via de novo pathway; 5-amino-1-(5-phospho-D-ribosyl)imidazole-4-carboxylate from 5-amino-1-(5-phospho-D-ribosyl)imidazole (N5-CAIR route): step 1/2. Catalyzes the ATP-dependent conversion of 5-aminoimidazole ribonucleotide (AIR) and HCO(3)(-) to N5-carboxyaminoimidazole ribonucleotide (N5-CAIR). The chain is N5-carboxyaminoimidazole ribonucleotide synthase from Staphylococcus aureus (strain MRSA252).